Reading from the N-terminus, the 507-residue chain is Protein zntA (507 aa).

Positions 1-18 are cleaved as a signal peptide; the sequence is MSIFAYSILAGLAPLLSS. An N-linked (GlcNAc...) asparagine glycan is attached at Asn-31. Residues 35–55 traverse the membrane as a helical segment; sequence FHILLCISAGLLFAVASLELI. The interval 124 to 179 is disordered; that stretch reads GLNLNNLNQATNLDNNEEDNDNLDNDGENEIENDHDHDHQEDEGGDNDHDHESEEK. The segment covering 125 to 137 has biased composition (low complexity); sequence LNLNNLNQATNLD. Positions 138-154 are enriched in acidic residues; it reads NNEEDNDNLDNDGENEI. The segment covering 155 to 179 has biased composition (basic and acidic residues); that stretch reads ENDHDHDHQEDEGGDNDHDHESEEK. Residues 185–205 form a helical membrane-spanning segment; the sequence is IPMYGIGFGFAILIIVESIFS. The disordered stretch occupies residues 209 to 264; the sequence is GGGGGGGHHSHSHGSLSSSSSNDVISDYISNNNSNNINNNDDDNNNNNNNNDDDDD. The segment covering 221 to 258 has biased composition (low complexity); sequence HGSLSSSSSNDVISDYISNNNSNNINNNDDDNNNNNNN. 5 N-linked (GlcNAc...) asparagine glycosylation sites follow: Asn-240, Asn-298, Asn-328, Asn-342, and Asn-351. The disordered stretch occupies residues 305-350; sequence PNIASPVMNKDNNNNDKDKNRNSNKSDIKNSGSINNGNNSGNNNNN. Residues 317–332 are compositionally biased toward basic and acidic residues; it reads NNNDKDKNRNSNKSDI. The segment covering 333–350 has biased composition (low complexity); that stretch reads KNSGSINNGNNSGNNNNN. 5 helical membrane-spanning segments follow: residues 355 to 375, 388 to 408, 422 to 442, 451 to 471, and 486 to 506; these read LTIT…VVIS, VALA…SLIL, FFYF…SSFL, GAFV…TAIL, and LFSI…FHGA.

Belongs to the ZIP transporter (TC 2.A.5) family.

The protein resides in the membrane. Its function is as follows. May transport divalent cations. May participate, with dstA, in the regulation of the differentiation of stalk cells during development. This chain is Protein zntA (zntA), found in Dictyostelium discoideum (Social amoeba).